A 538-amino-acid chain; its full sequence is Dihomomethionine N-hydroxylase (538 aa).

The helical transmembrane segment at L8–L28 threads the bilayer.

This sequence belongs to the cytochrome P450 family. Heme is required as a cofactor. As to expression, highly expressed in cotyledons, leaves, stems and siliques. Detected in flowers and lateral roots, but not in the main root. Expressed only in the vascular bundles in apical plant parts.

The protein localises to the endoplasmic reticulum membrane. It catalyses the reaction an L-polyhomomethionine + 2 reduced [NADPH--hemoprotein reductase] + 2 O2 = an (E)-omega-(methylsulfanyl)-alkanal oxime + 2 oxidized [NADPH--hemoprotein reductase] + CO2 + 3 H2O + 2 H(+). It carries out the reaction L-dihomomethionine + 2 reduced [NADPH--hemoprotein reductase] + 2 O2 = (E)-5-(methylsulfanyl)pentanal oxime + 2 oxidized [NADPH--hemoprotein reductase] + CO2 + 3 H2O + 2 H(+). The catalysed reaction is L-trihomomethionine + 2 reduced [NADPH--hemoprotein reductase] + 2 O2 = (E)-6-(methylsulfanyl)hexanal oxime + 2 oxidized [NADPH--hemoprotein reductase] + CO2 + 3 H2O + 2 H(+). Its function is as follows. Catalyzes the conversion of the short chain elongated methionines di-, tri-, and tetrahomomethionine to their respective aldoximes 5-methylthiopentanaldoxime, 6-methylthiohexanaldoxime, and 7-methylheptanaldoxime. This is Dihomomethionine N-hydroxylase (CYP79F1) from Arabidopsis thaliana (Mouse-ear cress).